We begin with the raw amino-acid sequence, 482 residues long: Dihydrolipoyllysine-residue acetyltransferase component of pyruvate dehydrogenase complex, mitochondrial (482 aa).

The transit peptide at 1-28 (MSAFVRVVPRISRSSVLTRSLRLQLRCY) directs the protein to the mitochondrion. One can recognise a Lipoyl-binding domain in the interval 34–110 (HTIIGMPALS…PVNKPIAVYV (77 aa)). Lys75 carries the post-translational modification N6-lipoyllysine. The disordered stretch occupies residues 122–170 (FKLEDSGSDSKTSTKAQPAEPQAEKKQEAPAEETKTSAPEAKKSDVAAP). Positions 143–166 (QAEKKQEAPAEETKTSAPEAKKSD) are enriched in basic and acidic residues. The Peripheral subunit-binding (PSBD) domain occupies 175 to 212 (FASPLAKTIALEKGISLKDVHGTGPRGRITKADIESYL). The tract at residues 214-251 (KSSKQSSQTSGAAAATPAAATSSTTAGSAPSPSSTASY) is disordered. Over residues 217 to 250 (KQSSQTSGAAAATPAAATSSTTAGSAPSPSSTAS) the composition is skewed to low complexity. Catalysis depends on residues His455 and Asp459.

Belongs to the 2-oxoacid dehydrogenase family. Eukaryotic pyruvate dehydrogenase (PDH) complexes are organized as a core consisting of the oligomeric dihydrolipoamide acetyl-transferase (E2), around which are arranged multiple copies of pyruvate dehydrogenase (E1), dihydrolipoamide dehydrogenase (E3) and protein X (E3BP) bound by non-covalent bonds. It depends on (R)-lipoate as a cofactor.

It is found in the mitochondrion matrix. The catalysed reaction is N(6)-[(R)-dihydrolipoyl]-L-lysyl-[protein] + acetyl-CoA = N(6)-[(R)-S(8)-acetyldihydrolipoyl]-L-lysyl-[protein] + CoA. Its function is as follows. The pyruvate dehydrogenase complex catalyzes the overall conversion of pyruvate to acetyl-CoA and CO(2). In Saccharomyces cerevisiae (strain ATCC 204508 / S288c) (Baker's yeast), this protein is Dihydrolipoyllysine-residue acetyltransferase component of pyruvate dehydrogenase complex, mitochondrial (LAT1).